The chain runs to 310 residues: MNKANLLHTDINLKITLFSEVSVGISANSILIFAHLCMLLGENRPKPIDLYIAFFSLTQLMLLITMGLIAVDMFMPWGRWDSTTCQSLIYLHRLLRGLTLSATCLLNVLWTITLSPRSSCLTKFKHKSLQHISCAFLFLCVLYMSFNSHLFISIIAYPNLTLENFMYVTQSCSLIPLSYFRKSMFSIPMAIREALLIGLMALSGGYMVAHLWRHKKQAQHLHRTSLSSKASPEQRATRTIMLLMSFFVVLYILDLVIFHSRMKFKDGSILYGVQIIVSHSYATVSPFVFICTEKRITNFLRSMCGRIVNI.

The Extracellular segment spans residues 1 to 20 (MNKANLLHTDINLKITLFSE). The helical transmembrane segment at 21–41 (VSVGISANSILIFAHLCMLLG) threads the bilayer. Residues 42-50 (ENRPKPIDL) lie on the Cytoplasmic side of the membrane. The chain crosses the membrane as a helical span at residues 51-71 (YIAFFSLTQLMLLITMGLIAV). Residues 72–93 (DMFMPWGRWDSTTCQSLIYLHR) are Extracellular-facing. An intrachain disulfide couples Cys85 to Cys172. Residues 94-114 (LLRGLTLSATCLLNVLWTITL) traverse the membrane as a helical segment. Residues 115-134 (SPRSSCLTKFKHKSLQHISC) lie on the Cytoplasmic side of the membrane. The chain crosses the membrane as a helical span at residues 135–155 (AFLFLCVLYMSFNSHLFISII). Over 156 to 183 (AYPNLTLENFMYVTQSCSLIPLSYFRKS) the chain is Extracellular. N-linked (GlcNAc...) asparagine glycosylation is present at Asn159. Residues 184–204 (MFSIPMAIREALLIGLMALSG) form a helical membrane-spanning segment. At 205 to 238 (GYMVAHLWRHKKQAQHLHRTSLSSKASPEQRATR) the chain is on the cytoplasmic side. Residues 239–259 (TIMLLMSFFVVLYILDLVIFH) form a helical membrane-spanning segment. The Extracellular segment spans residues 260–268 (SRMKFKDGS). A helical transmembrane segment spans residues 269–289 (ILYGVQIIVSHSYATVSPFVF). At 290 to 310 (ICTEKRITNFLRSMCGRIVNI) the chain is on the cytoplasmic side.

The protein belongs to the G-protein coupled receptor 1 family.

The protein resides in the cell membrane. In terms of biological role, putative pheromone receptor implicated in the regulation of social and reproductive behavior. This chain is Vomeronasal type-1 receptor 53 (Vmn1r53), found in Mus musculus (Mouse).